Consider the following 378-residue polypeptide: Rhodopsin (378 aa).

The Extracellular segment spans residues 1–53 (MMSIASGPSHAAYTWTAQGGGFGNQTVVDKVPPEMLHLVDAHWYQFPPMNPLW). Asn24 is a glycosylation site (N-linked (GlcNAc...) asparagine). The chain crosses the membrane as a helical span at residues 54 to 78 (HAILGFVIGILGMISVIGNGMVIYI). Residues 79–90 (FTTTKSLRTPSN) lie on the Cytoplasmic side of the membrane. The helical transmembrane segment at 91-115 (LLVINLAISDFLMMLSMSPAMVINC) threads the bilayer. Residues 116 to 130 (YYETWVLGPLVCELY) lie on the Extracellular side of the membrane. The cysteines at positions 127 and 204 are disulfide-linked. The chain crosses the membrane as a helical span at residues 131-150 (GLTGSLFGCGSIWTMTMIAF). The Cytoplasmic segment spans residues 151-169 (DRYNVIVKGLSAKPMTING). The chain crosses the membrane as a helical span at residues 170-193 (ALLRILGIWFFSLGWTIAPMFGWN). The Extracellular segment spans residues 194-217 (RYVPEGNMTACGTDYLTKDLLSRS). N-linked (GlcNAc...) asparagine glycosylation is present at Asn200. The helical transmembrane segment at 218 to 245 (YILVYSFFCYFLPLFLIIYSYFFIIQAV) threads the bilayer. The Cytoplasmic portion of the chain corresponds to 246–280 (AAHEKNMREQAKKMNVASLRSAENQSTSAECKLAK). The chain crosses the membrane as a helical span at residues 281 to 304 (VALMTISLWFMAWTPYLVINYAGI). At 305–311 (FETVKIN) the chain is on the extracellular side. Residues 312–336 (PLFTIWGSLFAKANAVYNPIVYGIS) traverse the membrane as a helical segment. At Lys323 the chain carries N6-(retinylidene)lysine. Topologically, residues 337–378 (HPKYRAALFQRFPSLACSSGPAGADTLSTTTTVTEGTEKPAA) are cytoplasmic. Positions 356 to 378 (GPAGADTLSTTTTVTEGTEKPAA) are disordered. Over residues 362–371 (TLSTTTTVTE) the composition is skewed to low complexity.

This sequence belongs to the G-protein coupled receptor 1 family. Opsin subfamily. Post-translationally, phosphorylated on some or all of the serine and threonine residues present in the C-terminal region.

The protein resides in the membrane. Its function is as follows. Visual pigments are the light-absorbing molecules that mediate vision. They consist of an apoprotein, opsin, covalently linked to cis-retinal. The polypeptide is Rhodopsin (Cataglyphis bombycina (Saharan silver ant)).